The sequence spans 250 residues: Complement factor B-like protease (250 aa).

3 Sushi domains span residues 3-73 (TRCD…KCRA), 74-133 (VWCP…VCDD), and 136-193 (GDCP…QCRA). Cystine bridges form between C5/C44, C30/C71, C76/C118, C104/C131, C138/C178, and C164/C191. The N-linked (GlcNAc...) asparagine glycan is linked to N115. N-linked (GlcNAc...) asparagine glycosylation occurs at N221.

It belongs to the peptidase S1 family. In terms of tissue distribution, plasma.

The protein resides in the secreted. Functionally, required in both the classical and alternate pathways of the complement system. This chain is Complement factor B-like protease, found in Gallus gallus (Chicken).